Here is a 405-residue protein sequence, read N- to C-terminus: Metallophosphoesterase 1 (405 aa).

Residues 31–51 traverse the membrane as a helical segment; the sequence is IFGSILLVFFFCEFLVYYLVI. A divalent metal cation is bound by residues aspartate 78, aspartate 120, asparagine 158, histidine 261, histidine 315, and histidine 317. A helical transmembrane segment spans residues 369–389; sequence IIYIYCTASVLLTGYVLACLW.

This sequence belongs to the metallophosphoesterase superfamily. MPPE1 family. Mn(2+) serves as cofactor.

It is found in the endoplasmic reticulum-Golgi intermediate compartment membrane. Metallophosphoesterase that catalyzes the removal of a side-chain ethanolamine-phosphate (EtNP) from the second mannose of the GPI-anchor protein intermediate. Participates in the glycan remodeling steps of GPI-anchor maturation to allow an efficient transport of GPI-anchor proteins from the endoplasmic reticulum to the Golgi. This is Metallophosphoesterase 1 from Xenopus laevis (African clawed frog).